Reading from the N-terminus, the 101-residue chain is NAD(P)H-quinone oxidoreductase subunit 4L, chloroplastic (101 aa).

3 helical membrane-spanning segments follow: residues 2 to 22 (MLEHVLVLSAYLFSIGIYGLI), 32 to 52 (MCLELILNAVNINFVTFSDFF), and 61 to 81 (IFSIFVIAIAAAEAAIGPAIV).

The protein belongs to the complex I subunit 4L family. As to quaternary structure, NDH is composed of at least 16 different subunits, 5 of which are encoded in the nucleus.

The protein resides in the plastid. It localises to the chloroplast thylakoid membrane. The enzyme catalyses a plastoquinone + NADH + (n+1) H(+)(in) = a plastoquinol + NAD(+) + n H(+)(out). It carries out the reaction a plastoquinone + NADPH + (n+1) H(+)(in) = a plastoquinol + NADP(+) + n H(+)(out). Its function is as follows. NDH shuttles electrons from NAD(P)H:plastoquinone, via FMN and iron-sulfur (Fe-S) centers, to quinones in the photosynthetic chain and possibly in a chloroplast respiratory chain. The immediate electron acceptor for the enzyme in this species is believed to be plastoquinone. Couples the redox reaction to proton translocation, and thus conserves the redox energy in a proton gradient. The protein is NAD(P)H-quinone oxidoreductase subunit 4L, chloroplastic of Morus indica (Mulberry).